The chain runs to 843 residues: Glycogen phosphorylase, muscle form (843 aa).

Serine 2 carries the N-acetylserine modification. Phosphoserine; by PHK; in form phosphorylase A is present on serine 15. Residues aspartate 43 and tyrosine 76 each coordinate AMP. A phosphotyrosine mark is found at tyrosine 204 and tyrosine 227. An AMP-binding site is contributed by 310–319; the sequence is RRFKSSKFGC. Serine 430 carries the post-translational modification Phosphoserine. The residue at position 473 (tyrosine 473) is a Phosphotyrosine. Position 514 is a phosphoserine (serine 514). N6-(pyridoxal phosphate)lysine is present on lysine 681. Residues serine 747 and serine 748 each carry the phosphoserine modification.

It belongs to the glycogen phosphorylase family. In terms of assembly, homodimer. Homotetramer; to form the enzymatically active phosphorylase A. The cofactor is pyridoxal 5'-phosphate. Post-translationally, phosphorylation of Ser-15 converts phosphorylase B (unphosphorylated) to phosphorylase A.

It carries out the reaction [(1-&gt;4)-alpha-D-glucosyl](n) + phosphate = [(1-&gt;4)-alpha-D-glucosyl](n-1) + alpha-D-glucose 1-phosphate. Its activity is regulated as follows. Allosterically regulated through the non-covalent binding of metabolites, being activated by AMP and inhibited by ATP, ADP, and glucose-6-phosphate. The activity is also controlled by post-translational modifications including phosphorylation. Its function is as follows. Allosteric enzyme that catalyzes the rate-limiting step in glycogen catabolism, the phosphorolytic cleavage of glycogen to produce glucose-1-phosphate, and plays a central role in maintaining cellular and organismal glucose homeostasis. The polypeptide is Glycogen phosphorylase, muscle form (Oryctolagus cuniculus (Rabbit)).